The following is a 473-amino-acid chain: Inactive pancreatic lipase-related protein 1 (473 aa).

The N-terminal stretch at 1 to 17 (MLILWTIPLFLLGAAQG) is a signal peptide. Cystine bridges form between C21–C27 and C109–C120. S171 serves as the catalytic Nucleophile. The Charge relay system role is filled by D194. Positions 205, 208, 210, and 213 each coordinate Ca(2+). C255 and C279 are joined by a disulfide. H281 (charge relay system) is an active-site residue. Disulfide bonds link C303–C314, C317–C322, and C451–C467. In terms of domain architecture, PLAT spans 356-467 (WRYRVSLTFS…EDILLTLLPC (112 aa)).

Belongs to the AB hydrolase superfamily. Lipase family. In terms of tissue distribution, expressed in female, but not in male, lacrimal gland. Expressed in male and female sublingual gland and pancreas.

The protein localises to the secreted. Functionally, may function as inhibitor of dietary triglyceride digestion. Lacks detectable lipase activity (in vitro). The protein is Inactive pancreatic lipase-related protein 1 (Pnliprp1) of Mus musculus (Mouse).